The sequence spans 122 residues: Large ribosomal subunit protein uL14 (122 aa).

This sequence belongs to the universal ribosomal protein uL14 family. Part of the 50S ribosomal subunit. Forms a cluster with proteins L3 and L19. In the 70S ribosome, L14 and L19 interact and together make contacts with the 16S rRNA in bridges B5 and B8.

Functionally, binds to 23S rRNA. Forms part of two intersubunit bridges in the 70S ribosome. In Syntrophus aciditrophicus (strain SB), this protein is Large ribosomal subunit protein uL14.